We begin with the raw amino-acid sequence, 535 residues long: Inositol 1,4,5-trisphosphate receptor-interacting protein-like 2 (535 aa).

Residues 1–38 (MSVHYTLNLRVFWPLVTGLCTALVCLYHVLRGSGGARA) form the signal peptide. The Extracellular segment spans residues 39 to 43 (EPADG). The helical transmembrane segment at 44 to 64 (VDGGFPLLKVAVLLLLSYVLL) threads the bilayer. At 65–535 (RCRHAVRQRF…RTQGFLEGEP (471 aa)) the chain is on the cytoplasmic side. Ser139 carries the post-translational modification Phosphoserine.

This sequence belongs to the ITPRIP family.

The protein localises to the membrane. This Homo sapiens (Human) protein is Inositol 1,4,5-trisphosphate receptor-interacting protein-like 2 (ITPRIPL2).